The following is a 70-amino-acid chain: Sec-independent protein translocase protein TatA (70 aa).

Residues 1–21 form a helical membrane-spanning segment; that stretch reads MGSFSVWHWLIVLVIVLVLFG. Positions 42–70 are disordered; it reads GMADEDQTPPPADANANAKTVDHKADEIK. Residues 61-70 are compositionally biased toward basic and acidic residues; the sequence is TVDHKADEIK.

This sequence belongs to the TatA/E family. In terms of assembly, the Tat system comprises two distinct complexes: a TatABC complex, containing multiple copies of TatA, TatB and TatC subunits, and a separate TatA complex, containing only TatA subunits. Substrates initially bind to the TatABC complex, which probably triggers association of the separate TatA complex to form the active translocon.

The protein localises to the cell inner membrane. In terms of biological role, part of the twin-arginine translocation (Tat) system that transports large folded proteins containing a characteristic twin-arginine motif in their signal peptide across membranes. TatA could form the protein-conducting channel of the Tat system. This is Sec-independent protein translocase protein TatA from Agrobacterium fabrum (strain C58 / ATCC 33970) (Agrobacterium tumefaciens (strain C58)).